The chain runs to 137 residues: Large ribosomal subunit protein uL16 (137 aa).

This sequence belongs to the universal ribosomal protein uL16 family. As to quaternary structure, part of the 50S ribosomal subunit.

Its function is as follows. Binds 23S rRNA and is also seen to make contacts with the A and possibly P site tRNAs. The protein is Large ribosomal subunit protein uL16 of Pseudomonas aeruginosa (strain LESB58).